The sequence spans 216 residues: Pyrophosphatase PpaX (216 aa).

The Nucleophile role is filled by Asp9.

It belongs to the HAD-like hydrolase superfamily. PpaX family. It depends on Mg(2+) as a cofactor.

It carries out the reaction diphosphate + H2O = 2 phosphate + H(+). In terms of biological role, hydrolyzes pyrophosphate formed during P-Ser-HPr dephosphorylation by HPrK/P. Might play a role in controlling the intracellular pyrophosphate pool. This is Pyrophosphatase PpaX from Bacillus cereus (strain ATCC 10987 / NRS 248).